The sequence spans 318 residues: Trans-prenyltransferase (318 aa).

The helical transmembrane segment at 1-21 threads the bilayer; it reads MLHLIYISIIVVLIIILISYT. 3 residues coordinate isopentenyl diphosphate: K85, R88, and H122. Residues D129 and D135 each coordinate Mg(2+). Residue R140 coordinates dimethylallyl diphosphate. R141 lines the isopentenyl diphosphate pocket. Residues K216, T217, and Q254 each contribute to the dimethylallyl diphosphate site.

The protein belongs to the FPP/GGPP synthase family. Asfivirus trans-prenyltransferase subfamily. The cofactor is Mg(2+).

Its subcellular location is the host endoplasmic reticulum. The protein resides in the host membrane. It catalyses the reaction isopentenyl diphosphate + dimethylallyl diphosphate = (2E)-geranyl diphosphate + diphosphate. It carries out the reaction isopentenyl diphosphate + (2E)-geranyl diphosphate = (2E,6E)-farnesyl diphosphate + diphosphate. The catalysed reaction is isopentenyl diphosphate + (2E,6E)-farnesyl diphosphate = (2E,6E,10E)-geranylgeranyl diphosphate + diphosphate. The enzyme catalyses isopentenyl diphosphate + (2E,6E,10E)-geranylgeranyl diphosphate = (2E,6E,10E,14E)-geranylfarnesyl diphosphate + diphosphate. The protein operates within isoprenoid biosynthesis; farnesyl diphosphate biosynthesis; farnesyl diphosphate from geranyl diphosphate and isopentenyl diphosphate: step 1/1. It participates in isoprenoid biosynthesis; geranyl diphosphate biosynthesis; geranyl diphosphate from dimethylallyl diphosphate and isopentenyl diphosphate: step 1/1. It functions in the pathway isoprenoid biosynthesis; geranylgeranyl diphosphate biosynthesis; geranylgeranyl diphosphate from farnesyl diphosphate and isopentenyl diphosphate: step 1/1. In terms of biological role, trans-prenyltransferase that catalyzes the sequential condensation of isopentenyl diphosphate (IPP) with different allylic diphosphates, such as dimethylallyl diphosphate (DMAPP), geranyl diphosphate (GPP), farnesyl diphosphate (FPP) and geranylgeranyl diphosphate (GGPP), farnesyl diphosphate being the best allylic substrate. The sequence is that of Trans-prenyltransferase from African swine fever virus (isolate Tick/Malawi/Lil 20-1/1983) (ASFV).